The primary structure comprises 134 residues: Galectin-1 (134 aa).

Residue Ala-1 is modified to N-acetylalanine. In terms of domain architecture, Galectin spans 4–134 (GVAVTNLNLK…GLAFKSITTE (131 aa)). A beta-D-galactoside-binding positions include 45–49 (HFNAR), His-53, Asn-62, and 69–72 (WGSE).

As to quaternary structure, homodimer.

The protein resides in the secreted. Its subcellular location is the extracellular space. The protein localises to the extracellular matrix. Functionally, may regulate cell apoptosis and cell differentiation. Binds beta-galactoside and a wide array of complex carbohydrates. The sequence is that of Galectin-1 from Rhinella arenarum (Argentine common toad).